The chain runs to 530 residues: tRNA-2-methylthio-N(6)-dimethylallyladenosine synthase (530 aa).

Residues 19–134 (RTYEVRTYGC…LPTLLERARH (116 aa)) form the MTTase N-terminal domain. [4Fe-4S] cluster contacts are provided by cysteine 28, cysteine 63, cysteine 97, cysteine 171, cysteine 175, and cysteine 178. The Radical SAM core domain maps to 157–387 (RDEIASGWVS…TALQERISHE (231 aa)). The 71-residue stretch at 390–460 (QRVVGRTVEV…PFHLIADSVD (71 aa)) folds into the TRAM domain. Residues 509–530 (VPTTASTSAPVGDGSAHPRHRA) are disordered.

This sequence belongs to the methylthiotransferase family. MiaB subfamily. Monomer. [4Fe-4S] cluster is required as a cofactor.

It localises to the cytoplasm. The catalysed reaction is N(6)-dimethylallyladenosine(37) in tRNA + (sulfur carrier)-SH + AH2 + 2 S-adenosyl-L-methionine = 2-methylsulfanyl-N(6)-dimethylallyladenosine(37) in tRNA + (sulfur carrier)-H + 5'-deoxyadenosine + L-methionine + A + S-adenosyl-L-homocysteine + 2 H(+). Its function is as follows. Catalyzes the methylthiolation of N6-(dimethylallyl)adenosine (i(6)A), leading to the formation of 2-methylthio-N6-(dimethylallyl)adenosine (ms(2)i(6)A) at position 37 in tRNAs that read codons beginning with uridine. This chain is tRNA-2-methylthio-N(6)-dimethylallyladenosine synthase, found in Clavibacter sepedonicus (Clavibacter michiganensis subsp. sepedonicus).